A 317-amino-acid polypeptide reads, in one-letter code: Mitochondrial thiamine pyrophosphate carrier 1 (317 aa).

3 Solcar repeats span residues 12–110 (GTRR…TTQV), 120–206 (PPAL…LRPV), and 214–309 (PFGS…SLKL). The next 6 helical transmembrane spans lie at 17–35 (VVLS…VAPL), 91–107 (LMYV…YRTT), 126–146 (FVSG…LDLL), 181–198 (GCSA…LFFA), 220–240 (AAAG…LDLV), and 284–301 (GLTV…ITMW).

Belongs to the mitochondrial carrier (TC 2.A.29) family.

It localises to the mitochondrion inner membrane. In terms of biological role, mitochondrial transporter that mediates uptake of thiamine pyrophosphate (ThPP) into mitochondria. This chain is Mitochondrial thiamine pyrophosphate carrier 1 (tpc1), found in Neosartorya fischeri (strain ATCC 1020 / DSM 3700 / CBS 544.65 / FGSC A1164 / JCM 1740 / NRRL 181 / WB 181) (Aspergillus fischerianus).